The sequence spans 134 residues: Large ribosomal subunit protein uL18 (134 aa).

Belongs to the universal ribosomal protein uL18 family. In terms of assembly, part of the 50S ribosomal subunit; part of the 5S rRNA/L5/L18/L25 subcomplex. Contacts the 5S and 23S rRNAs.

In terms of biological role, this is one of the proteins that bind and probably mediate the attachment of the 5S RNA into the large ribosomal subunit, where it forms part of the central protuberance. In Corynebacterium glutamicum (strain ATCC 13032 / DSM 20300 / JCM 1318 / BCRC 11384 / CCUG 27702 / LMG 3730 / NBRC 12168 / NCIMB 10025 / NRRL B-2784 / 534), this protein is Large ribosomal subunit protein uL18.